A 239-amino-acid chain; its full sequence is Succinate dehydrogenase [ubiquinone] iron-sulfur subunit (239 aa).

The 76-residue stretch at 24–99 folds into the 2Fe-2S ferredoxin-type domain; that stretch reads AEAKFSVHPI…NANIITIYPL (76 aa). Residues Cys-63, Cys-68, Cys-71, and Cys-83 each coordinate [2Fe-2S] cluster. In terms of domain architecture, 4Fe-4S ferredoxin-type spans 142–172; it reads DRSELNGIYECILCACCSASCPSYWWNHDKY. 3 residues coordinate [4Fe-4S] cluster: Cys-152, Cys-155, and Cys-158. Position 162 (Cys-162) interacts with [3Fe-4S] cluster. Trp-167 is an a ubiquinone binding site. [3Fe-4S] cluster contacts are provided by Cys-209 and Cys-215. Cys-219 contributes to the [4Fe-4S] cluster binding site.

The protein belongs to the succinate dehydrogenase/fumarate reductase iron-sulfur protein family. In terms of assembly, component of complex II composed of four subunits: a flavoprotein (FP), an iron-sulfur protein (IP), and a cytochrome b composed of a large and a small subunit. Requires [2Fe-2S] cluster as cofactor. The cofactor is [3Fe-4S] cluster. It depends on [4Fe-4S] cluster as a cofactor.

Its subcellular location is the mitochondrion inner membrane. The catalysed reaction is a quinone + succinate = fumarate + a quinol. It participates in carbohydrate metabolism; tricarboxylic acid cycle; fumarate from succinate (eukaryal route): step 1/1. Its function is as follows. Iron-sulfur protein (IP) subunit of succinate dehydrogenase (SDH) that is involved in complex II of the mitochondrial electron transport chain and is responsible for transferring electrons from succinate to ubiquinone (coenzyme Q). This chain is Succinate dehydrogenase [ubiquinone] iron-sulfur subunit (SDH2), found in Porphyra purpurea (Red seaweed).